We begin with the raw amino-acid sequence, 230 residues long: Sugar fermentation stimulation protein homolog (230 aa).

It belongs to the SfsA family.

The sequence is that of Sugar fermentation stimulation protein homolog from Clostridium acetobutylicum (strain ATCC 824 / DSM 792 / JCM 1419 / IAM 19013 / LMG 5710 / NBRC 13948 / NRRL B-527 / VKM B-1787 / 2291 / W).